The primary structure comprises 218 residues: Elongation factor Ts (218 aa).

The interval 82–85 (TDFV) is involved in Mg(2+) ion dislocation from EF-Tu.

This sequence belongs to the EF-Ts family.

Its subcellular location is the cytoplasm. Associates with the EF-Tu.GDP complex and induces the exchange of GDP to GTP. It remains bound to the aminoacyl-tRNA.EF-Tu.GTP complex up to the GTP hydrolysis stage on the ribosome. The polypeptide is Elongation factor Ts (Prochlorococcus marinus (strain MIT 9301)).